Reading from the N-terminus, the 424-residue chain is L-glutamine:2-deoxy-scyllo-inosose aminotransferase (424 aa).

Lysine 202 bears the N6-(pyridoxal phosphate)lysine mark.

It belongs to the DegT/DnrJ/EryC1 family. L-glutamine:2-deoxy-scyllo-inosose/scyllo-inosose aminotransferase subfamily. Pyridoxal 5'-phosphate is required as a cofactor.

The enzyme catalyses 2-deoxy-L-scyllo-inosose + L-glutamine = 2-deoxy-scyllo-inosamine + 2-oxoglutaramate. It catalyses the reaction 3-amino-2,3-dideoxy-scyllo-inosose + L-glutamine = 2-deoxystreptamine + 2-oxoglutaramate. It participates in metabolic intermediate biosynthesis; 2-deoxystreptamine biosynthesis; 2-deoxystreptamine from D-glucose 6-phosphate: step 2/4. Its pathway is metabolic intermediate biosynthesis; 2-deoxystreptamine biosynthesis; 2-deoxystreptamine from D-glucose 6-phosphate: step 4/4. It functions in the pathway antibiotic biosynthesis; neomycin biosynthesis. Its function is as follows. Catalyzes the PLP-dependent transamination of 2-deoxy-scyllo-inosose (2-DOI) to form 2-deoxy-scyllo-inosamine (2-DOIA) using L-glutamine as the amino donor. Also catalyzes the transamination of 3-amino-2,3-dideoxy-scyllo-inosose (keto-2-DOIA) into 2-deoxystreptamine (2-DOS). The protein is L-glutamine:2-deoxy-scyllo-inosose aminotransferase (neoB) of Streptomyces fradiae (Streptomyces roseoflavus).